The sequence spans 544 residues: CTP synthase (544 aa).

Residues 1–266 (MKKRFIFITG…DQIICHHFKL (266 aa)) form an amidoligase domain region. Ser-14 is a binding site for CTP. Residue Ser-14 participates in UTP binding. ATP contacts are provided by residues 15–20 (SLGKGI) and Asp-72. Positions 72 and 140 each coordinate Mg(2+). Residues 147–149 (DIE), 187–192 (KTKPTQ), and Lys-223 each bind CTP. UTP-binding positions include 187–192 (KTKPTQ) and Lys-223. A Glutamine amidotransferase type-1 domain is found at 291–541 (TIGIIGKYIK…IKAAIQYKKI (251 aa)). An L-glutamine-binding site is contributed by Gly-352. Catalysis depends on Cys-379, which acts as the Nucleophile; for glutamine hydrolysis. Residues 380-383 (LGMQ), Glu-403, and Arg-469 each bind L-glutamine. Residues His-514 and Glu-516 contribute to the active site.

It belongs to the CTP synthase family. As to quaternary structure, homotetramer.

It catalyses the reaction UTP + L-glutamine + ATP + H2O = CTP + L-glutamate + ADP + phosphate + 2 H(+). It carries out the reaction L-glutamine + H2O = L-glutamate + NH4(+). The catalysed reaction is UTP + NH4(+) + ATP = CTP + ADP + phosphate + 2 H(+). The protein operates within pyrimidine metabolism; CTP biosynthesis via de novo pathway; CTP from UDP: step 2/2. Its activity is regulated as follows. Allosterically activated by GTP, when glutamine is the substrate; GTP has no effect on the reaction when ammonia is the substrate. The allosteric effector GTP functions by stabilizing the protein conformation that binds the tetrahedral intermediate(s) formed during glutamine hydrolysis. Inhibited by the product CTP, via allosteric rather than competitive inhibition. Catalyzes the ATP-dependent amination of UTP to CTP with either L-glutamine or ammonia as the source of nitrogen. Regulates intracellular CTP levels through interactions with the four ribonucleotide triphosphates. The sequence is that of CTP synthase from Buchnera aphidicola subsp. Baizongia pistaciae (strain Bp).